We begin with the raw amino-acid sequence, 227 residues long: MKVSYHGHSVVKIETNGKVILIDPFLTGNPKTDLKAEDVKVDAILLSHGHGDHVGDTVELAKKNNAVVVAPFELATFLSWQGVNTHPMHIGGSHEFDFGKVKFTQAFHGSSYIDEENKTITYTGMPAGILFTAEEKTLYHAGDTALFSDMKLIGELNNIDVAFLPIGDNFTMGPEDAVLAAKWVQAKTVVPMHYNTFPVIEQDPYQFVEKLQNCTGKVLEAGESITL.

Belongs to the UPF0173 family.

The polypeptide is UPF0173 metal-dependent hydrolase BCAH820_4729 (Bacillus cereus (strain AH820)).